Reading from the N-terminus, the 568-residue chain is Periplasmic trehalase (568 aa).

Positions 1–39 are cleaved as a signal peptide; that stretch reads MPYATARSGDVMSSAAPPCCTSLLGLSLSMFVAPGTLTA. Residues R169, 176–177, N213, 222–224, 294–296, and G327 contribute to the substrate site; these read WD, RSQ, and RPE. Residues D329 and E511 each act as proton donor/acceptor in the active site. E526 contributes to the substrate binding site.

This sequence belongs to the glycosyl hydrolase 37 family.

It is found in the periplasm. It catalyses the reaction alpha,alpha-trehalose + H2O = alpha-D-glucose + beta-D-glucose. Functionally, provides the cells with the ability to utilize trehalose at high osmolarity by splitting it into glucose molecules that can subsequently be taken up by the phosphotransferase-mediated uptake system. This Xanthomonas axonopodis pv. citri (strain 306) protein is Periplasmic trehalase.